The primary structure comprises 450 residues: Folate synthesis bifunctional protein (450 aa).

The interval 1–166 (MTSWNFVCLS…TFAELAAIYP (166 aa)) is HPPK. In terms of domain architecture, Pterin-binding spans 180–441 (TQIMGIVNIT…QVEGNRRALA (262 aa)). The DHPS stretch occupies residues 182–450 (IMGIVNITDN…AAAAWAGMFV (269 aa)). Asn187 provides a ligand contact to Mg(2+). (7,8-dihydropterin-6-yl)methyl diphosphate-binding positions include Thr227, Asp267, Asn287, Asp358, Lys395, and 429 to 431 (RVH).

In the C-terminal section; belongs to the DHPS family. The protein in the N-terminal section; belongs to the HPPK family. It depends on Mg(2+) as a cofactor.

It carries out the reaction 6-hydroxymethyl-7,8-dihydropterin + ATP = (7,8-dihydropterin-6-yl)methyl diphosphate + AMP + H(+). The enzyme catalyses (7,8-dihydropterin-6-yl)methyl diphosphate + 4-aminobenzoate = 7,8-dihydropteroate + diphosphate. It participates in cofactor biosynthesis; tetrahydrofolate biosynthesis; 2-amino-4-hydroxy-6-hydroxymethyl-7,8-dihydropteridine diphosphate from 7,8-dihydroneopterin triphosphate: step 4/4. Its pathway is cofactor biosynthesis; tetrahydrofolate biosynthesis; 7,8-dihydrofolate from 2-amino-4-hydroxy-6-hydroxymethyl-7,8-dihydropteridine diphosphate and 4-aminobenzoate: step 1/2. The polypeptide is Folate synthesis bifunctional protein (folKP) (Chlamydia trachomatis serovar D (strain ATCC VR-885 / DSM 19411 / UW-3/Cx)).